A 79-amino-acid chain; its full sequence is Cell division protein ZapB (79 aa).

A coiled-coil region spans residues 4–78 (EVFEKLEAKV…LQALLGKMEE (75 aa)).

It belongs to the ZapB family. Homodimer. The ends of the coiled-coil dimer bind to each other, forming polymers. Interacts with FtsZ.

The protein resides in the cytoplasm. In terms of biological role, non-essential, abundant cell division factor that is required for proper Z-ring formation. It is recruited early to the divisome by direct interaction with FtsZ, stimulating Z-ring assembly and thereby promoting cell division earlier in the cell cycle. Its recruitment to the Z-ring requires functional FtsA or ZipA. In Cronobacter sakazakii (strain ATCC BAA-894) (Enterobacter sakazakii), this protein is Cell division protein ZapB.